An 86-amino-acid polypeptide reads, in one-letter code: Small ribosomal subunit protein uS15 (86 aa).

This sequence belongs to the universal ribosomal protein uS15 family. Part of the 30S ribosomal subunit. Forms a bridge to the 50S subunit in the 70S ribosome, contacting the 23S rRNA.

One of the primary rRNA binding proteins, it binds directly to 16S rRNA where it helps nucleate assembly of the platform of the 30S subunit by binding and bridging several RNA helices of the 16S rRNA. Its function is as follows. Forms an intersubunit bridge (bridge B4) with the 23S rRNA of the 50S subunit in the ribosome. In Endomicrobium trichonymphae, this protein is Small ribosomal subunit protein uS15.